We begin with the raw amino-acid sequence, 402 residues long: Calcium-responsive transactivator (402 aa).

Positions 1–148 (MSVAFASARP…TLPTTSMSLS (148 aa)) are N-terminal auto-inhibitory domain; necessary for interaction with SMARCA4/BRG1. An SH2-binding motif is present at residues 50-53 (YQQI). 2 disordered regions span residues 72-171 (QSLL…VPMQ) and 221-402 (AMMG…NYQQ). The span at 85-106 (LGPGALSQSGSSQGLHPQGSLS) shows a compositional bias: low complexity. Polar residues-rich tracts occupy residues 128 to 149 (NHVSMQQTAQSTLPTTSMSLSG) and 161 to 171 (SGPTSQSVPMQ). Residues 149–238 (GSGHGTGPGY…GGSMMGQRPM (90 aa)) form a methionine-rich intra-molecular domain region. Over residues 233–251 (MGQRPMAPYRPSQQGSSQQ) the composition is skewed to low complexity. An MFD domain region spans residues 252-323 (YLGQEEYYSE…SQYSQQQAGY (72 aa)). Positions 261–277 (EQYSHSQGSAEPMSQQY) are enriched in polar residues. Basic and acidic residues predominate over residues 296 to 305 (SYDRSFEDPT). A compositionally biased stretch (low complexity) spans 311–375 (GGNSQYSQQQ…QGQGQQYGSY (65 aa)). The necessary for nuclear localization stretch occupies residues 340 to 402 (NQQSYPGQQQ…EQGQYGNYQQ (63 aa)). Positions 359–362 (SQYS) match the SH2-binding motif. Over residues 376–388 (RTSQTGPSAQQQR) the composition is skewed to polar residues. Positions 377-385 (TSQTGPSAQ) match the SH3-binding motif. Residues 390–402 (YGYEQGQYGNYQQ) show a composition bias toward low complexity. Residues 393 to 402 (EQGQYGNYQQ) form a necessary for interaction with CREBBP and for the recruitment of CREBBP to the nuclear bodies region. Residues 397–400 (YGNY) carry the SH2-binding motif.

This sequence belongs to the SS18 family. In terms of assembly, homodimer. Dimerization may be necessary for its function in neuronal dendritic development. Interacts (via C-terminus) with CREBBP (via N-terminus), EP300 and SMARCA4/BRG1. Interacts with the nBAF complex. Association with CREBBP facilitates transcription while the association with SMARCA4/BRG1 suppresses CREST-mediated transcription in resting neurons.

The protein resides in the nucleus. The protein localises to the chromosome. Its subcellular location is the centromere. It localises to the kinetochore. Transcriptional activator which is required for calcium-dependent dendritic growth and branching in cortical neurons. Recruits CREB-binding protein (CREBBP) to nuclear bodies. Component of the CREST-BRG1 complex, a multiprotein complex that regulates promoter activation by orchestrating a calcium-dependent release of a repressor complex and a recruitment of an activator complex. In resting neurons, transcription of the c-FOS promoter is inhibited by BRG1-dependent recruitment of a phospho-RB1-HDAC1 repressor complex. Upon calcium influx, RB1 is dephosphorylated by calcineurin, which leads to release of the repressor complex. At the same time, there is increased recruitment of CREBBP to the promoter by a CREST-dependent mechanism, which leads to transcriptional activation. The CREST-BRG1 complex also binds to the NR2B promoter, and activity-dependent induction of NR2B expression involves a release of HDAC1 and recruitment of CREBBP. In Mus musculus (Mouse), this protein is Calcium-responsive transactivator (Ss18l1).